A 266-amino-acid polypeptide reads, in one-letter code: Glucosamine-6-phosphate deaminase (266 aa).

The active-site Proton acceptor; for enolization step is D72. The active-site For ring-opening step is the D141. The active-site Proton acceptor; for ring-opening step is H143. The For ring-opening step role is filled by E148.

Belongs to the glucosamine/galactosamine-6-phosphate isomerase family. NagB subfamily. In terms of assembly, homohexamer.

The catalysed reaction is alpha-D-glucosamine 6-phosphate + H2O = beta-D-fructose 6-phosphate + NH4(+). It participates in amino-sugar metabolism; N-acetylneuraminate degradation; D-fructose 6-phosphate from N-acetylneuraminate: step 5/5. With respect to regulation, allosterically activated by N-acetylglucosamine 6-phosphate (GlcNAc6P). In terms of biological role, catalyzes the reversible isomerization-deamination of glucosamine 6-phosphate (GlcN6P) to form fructose 6-phosphate (Fru6P) and ammonium ion. The protein is Glucosamine-6-phosphate deaminase of Salmonella typhi.